The following is a 205-amino-acid chain: Phosphoenolpyruvate guanylyltransferase (205 aa).

Phosphoenolpyruvate contacts are provided by Thr-138, Gly-154, and Ser-157.

It belongs to the CofC family.

It catalyses the reaction phosphoenolpyruvate + GTP + H(+) = enolpyruvoyl-2-diphospho-5'-guanosine + diphosphate. It participates in cofactor biosynthesis; coenzyme F420 biosynthesis. Guanylyltransferase that catalyzes the activation of phosphoenolpyruvate (PEP) as enolpyruvoyl-2-diphospho-5'-guanosine, via the condensation of PEP with GTP. It is involved in the biosynthesis of coenzyme F420, a hydride carrier cofactor. This Chloroflexus aurantiacus (strain ATCC 29364 / DSM 637 / Y-400-fl) protein is Phosphoenolpyruvate guanylyltransferase.